Consider the following 189-residue polypeptide: MKYRHLAKKSFLFIFMLAAFKTFAFELPSIPFPSPGSDEILFVVRDTTFNTKEPVNVKVSDFWTNRNVKRKPYKDVHGQSVFITSGTKWLTSYMTVSINNKDYTMAAVSGYKDGFSSVFVKSGQIQLQHYYNSVADFVGGDENSIPSKTYLDETPEYFVNVEAYESGSGNILVMCISNKESYFECESQQ.

Residues 1 to 24 form the signal peptide; it reads MKYRHLAKKSFLFIFMLAAFKTFA. Cys175 and Cys185 are disulfide-bonded.

This sequence belongs to the TDH hemolysin family. As to quaternary structure, homodimer.

Bacterial hemolysins are exotoxins that attack blood cell membranes and cause cell rupture by mechanisms not clearly defined. The polypeptide is Thermostable direct hemolysin (tdh) (Grimontia hollisae (Vibrio hollisae)).